Consider the following 412-residue polypeptide: Multidrug resistance protein MdtG (412 aa).

10 consecutive transmembrane segments (helical) span residues 20–40, 62–82, 96–116, 119–139, 150–170, 177–197, 225–245, 260–280, 294–314, and 382–402; these read LFVA…IMPF, LVFS…GGLA, LGMS…QFLI, ALLG…ATQI, TLST…GLLA, PVFF…LYFI, VLCL…IAPI, LAFI…MSAP, ILVA…LVQT, and TVFF…YWCL.

It belongs to the major facilitator superfamily. DHA1 family. MdtG (TC 2.A.1.2.20) subfamily.

It is found in the cell inner membrane. This Rahnella sp. (strain Y9602) protein is Multidrug resistance protein MdtG.